The primary structure comprises 379 residues: Protein trichome birefringence-like 36 (379 aa).

A helical; Signal-anchor for type II membrane protein transmembrane segment spans residues 8-24; sequence VLFLSLCLILGKVVLSQ. Residues 123 to 125 carry the GDS motif motif; that stretch reads GDS. Positions 353–367 match the DCXHWCLPGXXDXWN motif motif; the sequence is DCSHWCLPGVPDIWN.

This sequence belongs to the PC-esterase family. TBL subfamily.

It localises to the membrane. Functionally, may act as a bridging protein that binds pectin and other cell wall polysaccharides. Probably involved in maintaining esterification of pectins. May be involved in the specific O-acetylation of cell wall polymers. The polypeptide is Protein trichome birefringence-like 36 (TBL36) (Arabidopsis thaliana (Mouse-ear cress)).